A 585-amino-acid chain; its full sequence is Proline--tRNA ligase (585 aa).

It belongs to the class-II aminoacyl-tRNA synthetase family. ProS type 1 subfamily. Homodimer.

The protein resides in the cytoplasm. It catalyses the reaction tRNA(Pro) + L-proline + ATP = L-prolyl-tRNA(Pro) + AMP + diphosphate. Its function is as follows. Catalyzes the attachment of proline to tRNA(Pro) in a two-step reaction: proline is first activated by ATP to form Pro-AMP and then transferred to the acceptor end of tRNA(Pro). As ProRS can inadvertently accommodate and process non-cognate amino acids such as alanine and cysteine, to avoid such errors it has two additional distinct editing activities against alanine. One activity is designated as 'pretransfer' editing and involves the tRNA(Pro)-independent hydrolysis of activated Ala-AMP. The other activity is designated 'posttransfer' editing and involves deacylation of mischarged Ala-tRNA(Pro). The misacylated Cys-tRNA(Pro) is not edited by ProRS. In Cutibacterium acnes (strain DSM 16379 / KPA171202) (Propionibacterium acnes), this protein is Proline--tRNA ligase.